A 210-amino-acid polypeptide reads, in one-letter code: Prolactin-2 (210 aa).

A signal peptide spans Met-1–Ala-23. Disulfide bonds link Cys-69–Cys-183 and Cys-200–Cys-210.

The protein belongs to the somatotropin/prolactin family.

The protein localises to the secreted. The polypeptide is Prolactin-2 (prl2) (Oncorhynchus tshawytscha (Chinook salmon)).